Here is a 226-residue protein sequence, read N- to C-terminus: NifU-like protein 1, chloroplastic (226 aa).

The transit peptide at 1–76 directs the protein to the chloroplast; it reads MQTTTVPMAA…PVTAVQLPLT (76 aa).

This sequence belongs to the NifU family. As to quaternary structure, homodimer; disulfide-linked.

Its subcellular location is the plastid. It localises to the chloroplast stroma. In terms of biological role, molecular scaffold for [Fe-S] cluster assembly of chloroplastic iron-sulfur proteins. The sequence is that of NifU-like protein 1, chloroplastic (NIFU1) from Oryza sativa subsp. japonica (Rice).